Consider the following 152-residue polypeptide: Ribosome maturation factor RimP (152 aa).

The protein belongs to the RimP family.

The protein resides in the cytoplasm. Its function is as follows. Required for maturation of 30S ribosomal subunits. In Yersinia enterocolitica serotype O:8 / biotype 1B (strain NCTC 13174 / 8081), this protein is Ribosome maturation factor RimP.